The sequence spans 395 residues: 8-amino-7-oxononanoate synthase (395 aa).

R24 contributes to the substrate binding site. 111-112 (GF) contacts pyridoxal 5'-phosphate. Residue H136 coordinates substrate. Pyridoxal 5'-phosphate-binding positions include S184, 209 to 212 (DDAH), and 240 to 243 (TLSK). Residue K243 is modified to N6-(pyridoxal phosphate)lysine. Substrate is bound at residue T357.

It belongs to the class-II pyridoxal-phosphate-dependent aminotransferase family. BioF subfamily. In terms of assembly, homodimer. Pyridoxal 5'-phosphate serves as cofactor.

It catalyses the reaction 6-carboxyhexanoyl-[ACP] + L-alanine + H(+) = (8S)-8-amino-7-oxononanoate + holo-[ACP] + CO2. It participates in cofactor biosynthesis; biotin biosynthesis. In terms of biological role, catalyzes the decarboxylative condensation of pimeloyl-[acyl-carrier protein] and L-alanine to produce 8-amino-7-oxononanoate (AON), [acyl-carrier protein], and carbon dioxide. This chain is 8-amino-7-oxononanoate synthase, found in Alkaliphilus oremlandii (strain OhILAs) (Clostridium oremlandii (strain OhILAs)).